Consider the following 35-residue polypeptide: 30 kDa neutral phosphatase (35 aa).

Residues 1-28 (KSSAEVQQTQQASIPASQKANLGNQNNI) are compositionally biased toward polar residues. The disordered stretch occupies residues 1–35 (KSSAEVQQTQQASIPASQKANLGNQNNIMXVAXYQ).

Its function is as follows. Highly cationic enzyme that can bind human or rat immunoglobulins as well as serum albumin, and could therefore be involved in post-infectious sequelae. This Staphylococcus aureus protein is 30 kDa neutral phosphatase.